We begin with the raw amino-acid sequence, 154 residues long: Probable chemoreceptor glutamine deamidase CheD (154 aa).

Belongs to the CheD family.

It carries out the reaction L-glutaminyl-[protein] + H2O = L-glutamyl-[protein] + NH4(+). Functionally, probably deamidates glutamine residues to glutamate on methyl-accepting chemotaxis receptors (MCPs), playing an important role in chemotaxis. The chain is Probable chemoreceptor glutamine deamidase CheD from Methanococcus maripaludis (strain C6 / ATCC BAA-1332).